Here is a 508-residue protein sequence, read N- to C-terminus: Steroid 17-alpha-hydroxylase/17,20 lyase (508 aa).

Residue N202 coordinates substrate. C442 contributes to the heme binding site.

Belongs to the cytochrome P450 family. Heme serves as cofactor.

It localises to the endoplasmic reticulum membrane. The protein resides in the microsome membrane. The catalysed reaction is a C21-steroid + reduced [NADPH--hemoprotein reductase] + O2 = a 17alpha-hydroxy-C21-steroid + oxidized [NADPH--hemoprotein reductase] + H2O + H(+). It carries out the reaction progesterone + reduced [NADPH--hemoprotein reductase] + O2 = 17alpha-hydroxyprogesterone + oxidized [NADPH--hemoprotein reductase] + H2O + H(+). It catalyses the reaction pregnenolone + reduced [NADPH--hemoprotein reductase] + O2 = 17alpha-hydroxypregnenolone + oxidized [NADPH--hemoprotein reductase] + H2O + H(+). The enzyme catalyses 17alpha-hydroxyprogesterone + reduced [NADPH--hemoprotein reductase] + O2 = androst-4-ene-3,17-dione + acetate + oxidized [NADPH--hemoprotein reductase] + H2O + 2 H(+). The catalysed reaction is 17alpha-hydroxyprogesterone + reduced [NADPH--hemoprotein reductase] + O2 = 16alpha,17alpha-dihydroxyprogesterone + oxidized [NADPH--hemoprotein reductase] + H2O + H(+). It carries out the reaction 16alpha,17alpha-dihydroxyprogesterone + reduced [NADPH--hemoprotein reductase] + O2 = 6beta,16alpha,17alpha-trihydroxyprogesterone + oxidized [NADPH--hemoprotein reductase] + H2O + H(+). It catalyses the reaction 17alpha-hydroxypregnenolone + reduced [NADPH--hemoprotein reductase] + O2 = 3beta-hydroxyandrost-5-en-17-one + acetate + oxidized [NADPH--hemoprotein reductase] + H2O + 2 H(+). The enzyme catalyses 16alpha,17alpha-dihydroxypregnenolone + reduced [NADPH--hemoprotein reductase] + O2 = 3beta,16alpha-dihydroxy-androst-5-en-17-one + acetate + oxidized [NADPH--hemoprotein reductase] + H2O + 2 H(+). The catalysed reaction is 3beta-hydroxyandrost-5-en-17-one + reduced [NADPH--hemoprotein reductase] + O2 = 3beta,16alpha-dihydroxy-androst-5-en-17-one + oxidized [NADPH--hemoprotein reductase] + H2O + H(+). It carries out the reaction androst-4-ene-3,17-dione + reduced [NADPH--hemoprotein reductase] + O2 = 16alpha-hydroxyandrost-4-ene-3,17-dione + oxidized [NADPH--hemoprotein reductase] + H2O + H(+). It functions in the pathway steroid hormone biosynthesis. It participates in steroid biosynthesis; glucocorticoid biosynthesis. Regulated predominantly by intracellular cAMP levels. The 17,20-lyase activity is stimulated by cytochrome b5, which acts as an allosteric effector increasing the Vmax of the lyase activity. A cytochrome P450 monooxygenase involved in corticoid and androgen biosynthesis. Catalyzes 17-alpha hydroxylation of C21 steroids, which is common for both pathways. A second oxidative step, required only for androgen synthesis, involves an acyl-carbon cleavage. The 17-alpha hydroxy intermediates, as part of adrenal glucocorticoids biosynthesis pathway, are precursors of cortisol. Hydroxylates steroid hormones, pregnenolone and progesterone to form 17-alpha hydroxy metabolites, followed by the cleavage of the C17-C20 bond to form C19 steroids, dehydroepiandrosterone (DHEA) and androstenedione. Has 16-alpha hydroxylase activity. Catalyzes 16-alpha hydroxylation of 17-alpha hydroxy pregnenolone, followed by the cleavage of the C17-C20 bond to form 16-alpha-hydroxy DHEA. Also 16-alpha hydroxylates androgens, relevant for estriol synthesis. Mechanistically, uses molecular oxygen inserting one oxygen atom into a substrate, and reducing the second into a water molecule, with two electrons provided by NADPH via cytochrome P450 reductase (CPR; NADPH-ferrihemoprotein reductase). The sequence is that of Steroid 17-alpha-hydroxylase/17,20 lyase (CYP17A1) from Felis catus (Cat).